Here is a 564-residue protein sequence, read N- to C-terminus: Proline--tRNA ligase (564 aa).

The protein belongs to the class-II aminoacyl-tRNA synthetase family. ProS type 1 subfamily. Homodimer.

The protein localises to the cytoplasm. It catalyses the reaction tRNA(Pro) + L-proline + ATP = L-prolyl-tRNA(Pro) + AMP + diphosphate. Its function is as follows. Catalyzes the attachment of proline to tRNA(Pro) in a two-step reaction: proline is first activated by ATP to form Pro-AMP and then transferred to the acceptor end of tRNA(Pro). As ProRS can inadvertently accommodate and process non-cognate amino acids such as alanine and cysteine, to avoid such errors it has two additional distinct editing activities against alanine. One activity is designated as 'pretransfer' editing and involves the tRNA(Pro)-independent hydrolysis of activated Ala-AMP. The other activity is designated 'posttransfer' editing and involves deacylation of mischarged Ala-tRNA(Pro). The misacylated Cys-tRNA(Pro) is not edited by ProRS. The polypeptide is Proline--tRNA ligase (Bacillus subtilis (strain 168)).